The following is a 247-amino-acid chain: Carboxy-S-adenosyl-L-methionine synthase (247 aa).

S-adenosyl-L-methionine contacts are provided by residues Tyr39, 64–66 (GCS), 89–90 (DN), 117–118 (DI), Asn132, and Arg199.

Belongs to the class I-like SAM-binding methyltransferase superfamily. Cx-SAM synthase family. As to quaternary structure, homodimer.

It carries out the reaction prephenate + S-adenosyl-L-methionine = carboxy-S-adenosyl-L-methionine + 3-phenylpyruvate + H2O. Catalyzes the conversion of S-adenosyl-L-methionine (SAM) to carboxy-S-adenosyl-L-methionine (Cx-SAM). The protein is Carboxy-S-adenosyl-L-methionine synthase of Salmonella agona (strain SL483).